A 203-amino-acid chain; its full sequence is Glycerol-3-phosphate acyltransferase (203 aa).

Transmembrane regions (helical) follow at residues 6–26, 82–102, 118–138, and 141–161; these read LTLL…AVLV, AISL…PVFF, APIG…LVLI, and YSSL…WWLD.

This sequence belongs to the PlsY family. Probably interacts with PlsX.

The protein resides in the cell inner membrane. The enzyme catalyses an acyl phosphate + sn-glycerol 3-phosphate = a 1-acyl-sn-glycero-3-phosphate + phosphate. The protein operates within lipid metabolism; phospholipid metabolism. Catalyzes the transfer of an acyl group from acyl-phosphate (acyl-PO(4)) to glycerol-3-phosphate (G3P) to form lysophosphatidic acid (LPA). This enzyme utilizes acyl-phosphate as fatty acyl donor, but not acyl-CoA or acyl-ACP. This chain is Glycerol-3-phosphate acyltransferase, found in Shewanella oneidensis (strain ATCC 700550 / JCM 31522 / CIP 106686 / LMG 19005 / NCIMB 14063 / MR-1).